The following is a 753-amino-acid chain: Ribosome biogenesis protein BOP1 homolog (753 aa).

Residues 1–155 (MTKRSKGANE…RNTVGNVPLK (155 aa)) are disordered. 2 stretches are compositionally biased toward basic and acidic residues: residues 7-18 (GANEDKLIETKS) and 30-41 (KPVEAESLKEED). Composition is skewed to acidic residues over residues 64 to 75 (DDFDSDFSDSED) and 83 to 109 (EDGD…DDDG). Residues 110–121 (SEHVGSDNNEEH) show a composition bias toward basic and acidic residues. Positions 122 to 142 (GSDEDSERGEAVEESDSSEDE) are enriched in acidic residues. WD repeat units follow at residues 421 to 462 (GHTG…KVWQ), 464 to 502 (DEAI…DEEQ), 539 to 581 (RHFK…TQRL), 626 to 665 (TGLR…KPYK), 669 to 708 (NHPK…DLNQ), and 722 to 753 (SSKG…LYCH).

It belongs to the WD repeat BOP1/ERB1 family. As to quaternary structure, interacts with PES. Interacts with WDR12.

It localises to the nucleus. The protein resides in the nucleolus. Its subcellular location is the nucleoplasm. Required for maturation of ribosomal RNAs and formation of the large ribosomal subunit. Plays an essential role in cell growth and survival through its regulation of ribosome biogenesis and mitotic progression. The protein is Ribosome biogenesis protein BOP1 homolog of Arabidopsis thaliana (Mouse-ear cress).